An 868-amino-acid chain; its full sequence is Phospholipase D delta (868 aa).

The C2 domain occupies 1–154; that stretch reads MAEKVSEDVM…ASGERISGWF (154 aa). Asp-216 contributes to the Ca(2+) binding site. Positions 368–403 constitute a PLD phosphodiesterase 1 domain; it reads TLFTHHQKCVLVDTQAVGNNRKVTAFIGGLDLCDGR. Catalysis depends on residues His-373, Lys-375, and Asp-380. A 1,2-diacyl-sn-glycero-3-phosphate is bound at residue His-373. Residues His-409 and His-440 each contribute to the Ca(2+) site. The a 1,2-diacyl-sn-glycero-3-phosphate site is built by Gln-588 and His-718. The PLD phosphodiesterase 2 domain maps to 713 to 740; that stretch reads FMIYVHAKGMIVDDEYVLMGSANINQRS. Catalysis depends on residues His-718, Lys-720, and Asp-725. A Ca(2+)-binding site is contributed by Glu-781.

Belongs to the phospholipase D family. C2-PLD subfamily. As to quaternary structure, interacts with GAPC1 and GAPC2. Increased interaction in the presence of H(2)O(2). The cofactor is Ca(2+). As to expression, expressed in roots, leaves, stems, siliques and flowers. Strongly expressed in the vascular tissues of cotyledons and leaves under dehydration stress conditions. Expression is higher in old leaves than in young leaves. Expressed in leaves and guard cells. The isoform 2 may not be present in siliques.

The protein localises to the cell membrane. The catalysed reaction is a 1,2-diacyl-sn-glycero-3-phosphocholine + H2O = a 1,2-diacyl-sn-glycero-3-phosphate + choline + H(+). With respect to regulation, activated by free oleic acid in a dose-dependent manner and less effectively by other unsaturated fatty acids such as linoleic and linolenic acids. Not activated by the saturated fatty acids stearic and palmitic acids. PIP2 and Ca(2+) stimulate activity by promoting lipid substrate binding to the active site. Activated by H(2)O(2) and by binding to GAPC. Hydrolyzes glycerol-phospholipids at the terminal phosphodiesteric bond to generate phosphatidic acids (PA). May be involved in PA accumulation in the dehydration stress response and in the transduction of hormonal and environmental signals to the microtubules cytoskeleton. Prefers phosphatidylethanolamine to phosphatidylcholine as substrate. Involved in H(2)O(2) and abscisic acid (ABA)-induced stomatal closure. Involved in nitric oxide (NO) signaling during stomatal closure. Plays a positive role in ABA-promoted senescence. Involved in basal defense and nonhost resistance. This chain is Phospholipase D delta, found in Arabidopsis thaliana (Mouse-ear cress).